The sequence spans 273 residues: Chlorophyll a-b binding protein 8, chloroplastic (273 aa).

Residues 1–32 constitute a chloroplast transit peptide; sequence MATQALISSSSISTSAEAARQIIGSRISQSVT. Residue R33 is modified to N2-acetylarginine. Residue W56 participates in chlorophyll b binding. Positions 76, 82, and 100 each coordinate chlorophyll a. Residue R105 coordinates chlorophyll b. The chain crosses the membrane as a helical span at residues 106 to 126; it reads FAMLGAAGAIAPEILGKAGLI. Chlorophyll b contacts are provided by I140, E167, and R170. Chlorophyll a-binding residues include K224, E225, N228, R230, Q242, and H257. A helical transmembrane segment spans residues 231-251; it reads LAMLAILGYFIQALVTGVGPY.

The protein belongs to the light-harvesting chlorophyll a/b-binding (LHC) protein family. In terms of assembly, the LHC complex consists of chlorophyll a-b binding proteins. It depends on Binds at least 14 chlorophylls (8 Chl-a and 6 Chl-b) and carotenoids such as lutein and neoxanthin. as a cofactor. In terms of processing, photoregulated by reversible phosphorylation of its threonine residues.

The protein resides in the plastid. Its subcellular location is the chloroplast thylakoid membrane. In terms of biological role, the light-harvesting complex (LHC) functions as a light receptor, it captures and delivers excitation energy to photosystems with which it is closely associated. This is Chlorophyll a-b binding protein 8, chloroplastic (CAB8) from Solanum lycopersicum (Tomato).